Reading from the N-terminus, the 296-residue chain is Ribosomal RNA small subunit methyltransferase H (296 aa).

Residues 38–40 (GAH), glutamate 57, phenylalanine 80, aspartate 103, and histidine 110 each bind S-adenosyl-L-methionine.

The protein belongs to the methyltransferase superfamily. RsmH family.

It localises to the cytoplasm. It carries out the reaction cytidine(1402) in 16S rRNA + S-adenosyl-L-methionine = N(4)-methylcytidine(1402) in 16S rRNA + S-adenosyl-L-homocysteine + H(+). Specifically methylates the N4 position of cytidine in position 1402 (C1402) of 16S rRNA. This chain is Ribosomal RNA small subunit methyltransferase H, found in Borrelia garinii subsp. bavariensis (strain ATCC BAA-2496 / DSM 23469 / PBi) (Borreliella bavariensis).